The primary structure comprises 330 residues: Ketol-acid reductoisomerase (NADP(+)) (330 aa).

Residues 1–181 (MKMYYESDVN…GFTKAGVIET (181 aa)) enclose the KARI N-terminal Rossmann domain. Residues 24–27 (YGSQ), arginine 47, serine 52, and 82–85 (DEIQ) each bind NADP(+). Histidine 107 is a catalytic residue. Glycine 133 serves as a coordination point for NADP(+). A KARI C-terminal knotted domain is found at 182–327 (TFKEETETDL…ERLRKACGLQ (146 aa)). Positions 190, 194, 226, and 230 each coordinate Mg(2+). Serine 251 provides a ligand contact to substrate.

It belongs to the ketol-acid reductoisomerase family. The cofactor is Mg(2+).

It catalyses the reaction (2R)-2,3-dihydroxy-3-methylbutanoate + NADP(+) = (2S)-2-acetolactate + NADPH + H(+). It carries out the reaction (2R,3R)-2,3-dihydroxy-3-methylpentanoate + NADP(+) = (S)-2-ethyl-2-hydroxy-3-oxobutanoate + NADPH + H(+). Its pathway is amino-acid biosynthesis; L-isoleucine biosynthesis; L-isoleucine from 2-oxobutanoate: step 2/4. It functions in the pathway amino-acid biosynthesis; L-valine biosynthesis; L-valine from pyruvate: step 2/4. Functionally, involved in the biosynthesis of branched-chain amino acids (BCAA). Catalyzes an alkyl-migration followed by a ketol-acid reduction of (S)-2-acetolactate (S2AL) to yield (R)-2,3-dihydroxy-isovalerate. In the isomerase reaction, S2AL is rearranged via a Mg-dependent methyl migration to produce 3-hydroxy-3-methyl-2-ketobutyrate (HMKB). In the reductase reaction, this 2-ketoacid undergoes a metal-dependent reduction by NADPH to yield (R)-2,3-dihydroxy-isovalerate. In Methanobrevibacter smithii (strain ATCC 35061 / DSM 861 / OCM 144 / PS), this protein is Ketol-acid reductoisomerase (NADP(+)).